Reading from the N-terminus, the 645-residue chain is Protein FAM47B (645 aa).

3 stretches are compositionally biased toward basic and acidic residues: residues 1 to 11 (MGDRRPQDRPR), 238 to 251 (EPPE…RVDP), and 288 to 299 (PETRVSHLHPEP). Disordered regions lie at residues 1–23 (MGDR…WYCD) and 168–321 (AREK…SLCP).

This sequence belongs to the FAM47 family.

This is Protein FAM47B (FAM47B) from Homo sapiens (Human).